Here is a 599-residue protein sequence, read N- to C-terminus: Sulfite reductase [NADPH] flavoprotein alpha-component (599 aa).

Residues 64–202 form the Flavodoxin-like domain; sequence ITIISASQTG…AASEWRARVV (139 aa). FMN-binding positions include 70–75, 117–120, and 153–162; these read SQTGNA, STQG, and LGDSSYEFFC. The FAD-binding FR-type domain occupies 234–448; that stretch reads DAPLVASLSV…IEHNDNFRLP (215 aa). Residues T322, A356, 386–389, 404–406, Y410, and 419–422 each bind FAD; these read RLYS, TVG, and GGAS. NADP(+) contacts are provided by residues 519 to 520, 525 to 529, and D561; these read SR and KVYVQ. Y599 provides a ligand contact to FAD.

The protein belongs to the NADPH-dependent sulphite reductase flavoprotein subunit CysJ family. This sequence in the N-terminal section; belongs to the flavodoxin family. In the C-terminal section; belongs to the flavoprotein pyridine nucleotide cytochrome reductase family. As to quaternary structure, alpha(8)-beta(8). The alpha component is a flavoprotein, the beta component is a hemoprotein. FAD serves as cofactor. It depends on FMN as a cofactor.

The enzyme catalyses hydrogen sulfide + 3 NADP(+) + 3 H2O = sulfite + 3 NADPH + 4 H(+). Its pathway is sulfur metabolism; hydrogen sulfide biosynthesis; hydrogen sulfide from sulfite (NADPH route): step 1/1. Functionally, component of the sulfite reductase complex that catalyzes the 6-electron reduction of sulfite to sulfide. This is one of several activities required for the biosynthesis of L-cysteine from sulfate. The flavoprotein component catalyzes the electron flow from NADPH -&gt; FAD -&gt; FMN to the hemoprotein component. The polypeptide is Sulfite reductase [NADPH] flavoprotein alpha-component (Shigella dysenteriae serotype 1 (strain Sd197)).